Here is a 408-residue protein sequence, read N- to C-terminus: Gustatory receptor 10a (408 aa).

Topologically, residues 1-20 (MTSPDERKSFWERHEFKFYR) are cytoplasmic. The helical transmembrane segment at 21 to 38 (YGHVYALIYGQVVIDYVP) threads the bilayer. Topologically, residues 39 to 48 (QRALKRGVKV) are extracellular. The helical transmembrane segment at 49–69 (LLIAYGHLFSMLLIVVLPGYF) threads the bilayer. Residues 70 to 86 (CYHFRTLTDTLDRRLQL) are Cytoplasmic-facing. Residues 87-107 (LFYVSFTNTAIKYATVIVTYV) traverse the membrane as a helical segment. At 108-144 (ANTVHFEAINQRCTMQRTHLEFEFKNAPQEPKRPFEF) the chain is on the extracellular side. A helical membrane pass occupies residues 145–165 (FMYFKFCLINLMMMIQVCGIF). Topologically, residues 166–270 (AQYGEVGKGS…RESFRMHQFQ (105 aa)) are cytoplasmic. The chain crosses the membrane as a helical span at residues 271–291 (LIGLMLSTLINNLTNFYTLFH). Residues 292 to 304 (MLAKQSLEEVSYP) are Extracellular-facing. A helical membrane pass occupies residues 305–325 (VVVGSVYATGFYIDTYIVALI). Topologically, residues 326 to 381 (NEHIKLELEAVALTMRRFAEPREMDERLTREIEHLSLELLNYQPPMLCGLLHLDRR) are cytoplasmic. The helical transmembrane segment at 382 to 402 (LVYLIAVTAFSYFITLVQFDL) threads the bilayer. At 403-408 (YLRKKS) the chain is on the extracellular side.

It belongs to the insect chemoreceptor superfamily. Gustatory receptor (GR) family. Gr10a subfamily. In terms of tissue distribution, expressed in the medial aspect of the third antennal segment, and in neurons of the terminal external chemosensory organ of larvae.

The protein resides in the cell membrane. Probable gustatory receptor which mediates acceptance or avoidance behavior, depending on its substrates. This chain is Gustatory receptor 10a (Gr10a), found in Drosophila melanogaster (Fruit fly).